The chain runs to 442 residues: D-serine dehydratase 1 (442 aa).

N6-(pyridoxal phosphate)lysine is present on Lys-118.

This sequence belongs to the serine/threonine dehydratase family. DsdA subfamily. In terms of assembly, monomer. Pyridoxal 5'-phosphate serves as cofactor.

It catalyses the reaction D-serine = pyruvate + NH4(+). This is D-serine dehydratase 1 from Escherichia coli O6:K15:H31 (strain 536 / UPEC).